The primary structure comprises 133 residues: uncharacterized protein (133 aa).

Positions 1 to 23 (MSRKIIPALTIFFGPILILTAIT) are cleaved as a signal peptide. A disordered region spans residues 82–133 (ESIKNQNSLNKEKQQQQQQQQQQQQQQQQQQQQQQKPNTPPTPLTTPSTPKK). Residues 96–118 (QQQQQQQQQQQQQQQQQQQQQKP) are compositionally biased toward low complexity.

The protein resides in the secreted. This is an uncharacterized protein from Dictyostelium discoideum (Social amoeba).